The following is a 602-amino-acid chain: Elongation factor 4 (602 aa).

The 183-residue stretch at 2–184 (NHIRNFSIIA…LIVAKVPAPR (183 aa)) folds into the tr-type G domain. GTP is bound by residues 14-19 (DHGKST) and 131-134 (NKMD).

It belongs to the TRAFAC class translation factor GTPase superfamily. Classic translation factor GTPase family. LepA subfamily.

It is found in the cell inner membrane. The enzyme catalyses GTP + H2O = GDP + phosphate + H(+). Its function is as follows. Required for accurate and efficient protein synthesis under certain stress conditions. May act as a fidelity factor of the translation reaction, by catalyzing a one-codon backward translocation of tRNAs on improperly translocated ribosomes. Back-translocation proceeds from a post-translocation (POST) complex to a pre-translocation (PRE) complex, thus giving elongation factor G a second chance to translocate the tRNAs correctly. Binds to ribosomes in a GTP-dependent manner. The chain is Elongation factor 4 from Paracidovorax citrulli (strain AAC00-1) (Acidovorax citrulli).